Here is a 214-residue protein sequence, read N- to C-terminus: Single-pass membrane and coiled-coil domain-containing protein 1 (214 aa).

Residues 6–42 (TTLISLKEAMKRVDHKLQALETQFKELDFTKDNLMQK) adopt a coiled-coil conformation. The chain crosses the membrane as a helical span at residues 65 to 81 (ALQLTSMELNILYSYVI).

The protein resides in the membrane. The protein is Single-pass membrane and coiled-coil domain-containing protein 1 (SMCO1) of Homo sapiens (Human).